The primary structure comprises 97 residues: High mobility group protein homolog NHP1 (97 aa).

Residues 1–24 (MAGASDRTGVRRPRKAKKDPNAPK) form a disordered region. Residues 23–93 (PKRALSSYMF…RYEREKAEYA (71 aa)) constitute a DNA-binding region (HMG box).

The protein resides in the nucleus. The polypeptide is High mobility group protein homolog NHP1 (Babesia bovis).